Here is a 352-residue protein sequence, read N- to C-terminus: C-X-C chemokine receptor type 4 (352 aa).

Residues 1-21 (MEGISIYTSDNYTEEIGSGDY) are important for chemokine binding and signaling. The Extracellular portion of the chain corresponds to 1 to 38 (MEGISIYTSDNYTEEIGSGDYDSIKEPCFREENAHFNR). Position 7 is a sulfotyrosine (tyrosine 7). N-linked (GlcNAc...) asparagine glycosylation is present at asparagine 11. A Sulfotyrosine modification is found at tyrosine 12. The O-linked (Xyl...) (chondroitin sulfate) serine glycan is linked to serine 18. At tyrosine 21 the chain carries Sulfotyrosine. 2 disulfides stabilise this stretch: cysteine 28-cysteine 274 and cysteine 109-cysteine 186. Residues 39-63 (IFLPTIYSIIFLTGIVGNGLVILVM) form a helical membrane-spanning segment. Over 64–77 (GYQKKLRSMTDKYR) the chain is Cytoplasmic. The helical transmembrane segment at 78-99 (LHLSVADLLFVITLPFWAVDAV) threads the bilayer. Residues 94–97 (WAVD) are chemokine binding. Residues 100 to 110 (ANWYFGKFLCK) lie on the Extracellular side of the membrane. A helical membrane pass occupies residues 111-130 (AVHVIYTVNLYSSVLILAFI). A chemokine binding region spans residues 113–117 (HVIYT). Over 131–154 (SLDRYLAIVHATNSQRPRKLLAEK) the chain is Cytoplasmic. The Important for signaling motif lies at 133–135 (DRY). Positions 135–147 (YLAIVHATNSQRP) are involved in dimerization; when bound to chemokine. A helical membrane pass occupies residues 155 to 174 (VVYVGVWIPALLLTIPDFIF). At 175–195 (ANVSEADDRYICDRFYPNDLW) the chain is on the extracellular side. The chemokine binding, important for signaling stretch occupies residues 186–190 (CDRFY). The interval 191–210 (PNDLWVVVFQFQHIMVGLIL) is involved in dimerization. A helical transmembrane segment spans residues 196-216 (VVVFQFQHIMVGLILPGIVIL). The Cytoplasmic portion of the chain corresponds to 217–241 (SCYCIIISKLSHSKGHQKRKALKTT). Residues 242–261 (VILILAFFACWLPYYIGISI) form a helical membrane-spanning segment. Topologically, residues 262-282 (DSFILLEIIRQGCEFENTVHK) are extracellular. Residues 266–268 (LLE) are involved in dimerization. Residues 283–302 (WISITEALAFFHCCLNPILY) traverse the membrane as a helical segment. Over 303-352 (AFLGAKFKTSAQHALTSVSRGSSLKILSKGKRGGHSSVSTESESSSFHSS) the chain is Cytoplasmic. Residues serine 319 and serine 321 each carry the phosphoserine modification. Phosphoserine; by PKC and GRK6 is present on residues serine 324 and serine 325. A disordered region spans residues 329–352 (LSKGKRGGHSSVSTESESSSFHSS). Serine 330 carries the post-translational modification Phosphoserine; by GRK6. Lysine 331 is covalently cross-linked (Glycyl lysine isopeptide (Lys-Gly) (interchain with G-Cter in ubiquitin)). Over residues 337 to 352 (HSSVSTESESSSFHSS) the composition is skewed to low complexity. Phosphoserine; by GRK6 is present on serine 339. Phosphoserine is present on residues serine 348 and serine 351.

It belongs to the G-protein coupled receptor 1 family. In terms of assembly, monomer. Can form homodimers. Interacts with CD164. Interacts with ARRB2; the interaction is dependent on the C-terminal phosphorylation of CXCR4 and allows activation of MAPK1 and MAPK3. Interacts with ARR3; the interaction is dependent on the C-terminal phosphorylation of CXCR4 and modulates calcium mobilization. Interacts with RNF113A; the interaction, enhanced by CXCL12, promotes CXCR4 ubiquitination and subsequent degradation. Interacts (via the cytoplasmic C-terminal) with ITCH (via the WW domains I and II); the interaction, enhanced by CXCL12, promotes CXCR4 ubiquitination and leads to its degradation. Interacts with extracellular ubiquitin. Interacts with DBN1; this interaction is enhanced by antigenic stimulation. Following LPS binding, may form a complex with GDF5, HSP90AA1 and HSPA8. Phosphorylated on agonist stimulation. Rapidly phosphorylated on serine and threonine residues in the C-terminal. Phosphorylation at Ser-324 and Ser-325 leads to recruitment of ITCH, ubiquitination and protein degradation. In terms of processing, ubiquitinated after ligand binding, leading to its degradation. Ubiquitinated by ITCH at the cell membrane on agonist stimulation. The ubiquitin-dependent mechanism, endosomal sorting complex required for transport (ESCRT), then targets CXCR4 for lysosomal degradation. This process is dependent also on prior Ser-/Thr-phosphorylation in the C-terminal of CXCR4. Also binding of ARRB1 to STAM negatively regulates CXCR4 sorting to lysosomes though modulating ubiquitination of SFR5S. Post-translationally, sulfation is required for efficient binding of CXCL12/SDF-1alpha and promotes its dimerization. O- and N-glycosylated. N-glycosylation can mask coreceptor function. The O-glycosylation chondroitin sulfate attachment does not affect interaction with CXCL12/SDF-1alpha nor its coreceptor activity.

The protein localises to the cell membrane. It localises to the cell junction. The protein resides in the early endosome. Its subcellular location is the late endosome. It is found in the lysosome. Functionally, receptor for the C-X-C chemokine CXCL12/SDF-1 that transduces a signal by increasing intracellular calcium ion levels and enhancing MAPK1/MAPK3 activation. Involved in the AKT signaling cascade. Plays a role in regulation of cell migration, e.g. during wound healing. Acts as a receptor for extracellular ubiquitin; leading to enhanced intracellular calcium ions and reduced cellular cAMP levels. Binds bacterial lipopolysaccharide (LPS) et mediates LPS-induced inflammatory response, including TNF secretion by monocytes. Involved in hematopoiesis and in cardiac ventricular septum formation. Also plays an essential role in vascularization of the gastrointestinal tract, probably by regulating vascular branching and/or remodeling processes in endothelial cells. Involved in cerebellar development. In the CNS, could mediate hippocampal-neuron survival. This Callithrix jacchus (White-tufted-ear marmoset) protein is C-X-C chemokine receptor type 4 (CXCR4).